The chain runs to 62 residues: Defensin BmKDfsin5 (62 aa).

The N-terminal stretch at 1-24 (MKVIALFFLFAFIFCTLEVAIVEA) is a signal peptide. 3 cysteine pairs are disulfide-bonded: Cys-28-Cys-49, Cys-35-Cys-57, and Cys-39-Cys-59.

The protein belongs to the invertebrate defensin family. Type 2 subfamily. In terms of tissue distribution, highly expressed in non-venom gland (hemolymph) and moderately expressed in venom gland.

The protein resides in the secreted. In terms of biological role, antibacterial peptide active against Gram-positive bacteria (including S.aureus ATCC25923 (MIC=2.5 uM), M.luteus AB93113 (MIC=2.5 uM), and the antibiotic-resistant S.epidermidis PRSE P1389 (MIC=1.25 uM)), but not against Gram-negative bacteria (including E.coli and P.aeruginosa). Also has weak blocking activity on Kv1.1/KCNA1 (8.7% inhibition), Kv1.2/KCNA2 (10.2% inhibition), Kv1.3/KCNA3 (9.0% inhibition), KCa3.1/KCNN4/IK (9.1% inhibition), KCa2.3/KCNN3/SK3 (46.3% inhibition) and Kv11.1/KCNH2/ERG1 (16.9% inhibition) channels (tested at 1 uM). It inhibits potassium channel current by interacting with the pore region. This is Defensin BmKDfsin5 from Olivierus martensii (Manchurian scorpion).